Here is a 91-residue protein sequence, read N- to C-terminus: Co-chaperonin GroES (91 aa).

It belongs to the GroES chaperonin family. In terms of assembly, heptamer of 7 subunits arranged in a ring. Interacts with the chaperonin GroEL.

Its subcellular location is the cytoplasm. In terms of biological role, together with the chaperonin GroEL, plays an essential role in assisting protein folding. The GroEL-GroES system forms a nano-cage that allows encapsulation of the non-native substrate proteins and provides a physical environment optimized to promote and accelerate protein folding. GroES binds to the apical surface of the GroEL ring, thereby capping the opening of the GroEL channel. This chain is Co-chaperonin GroES, found in Oenococcus oeni (strain ATCC BAA-331 / PSU-1).